The following is a 327-amino-acid chain: GMP reductase (327 aa).

Cysteine 176 functions as the Thioimidate intermediate in the catalytic mechanism. 205-228 (IIADGGIRTHGDIAKSIRFGASMV) contributes to the NADP(+) binding site.

Belongs to the IMPDH/GMPR family. GuaC type 2 subfamily.

It catalyses the reaction IMP + NH4(+) + NADP(+) = GMP + NADPH + 2 H(+). Functionally, catalyzes the irreversible NADPH-dependent deamination of GMP to IMP. It functions in the conversion of nucleobase, nucleoside and nucleotide derivatives of G to A nucleotides, and in maintaining the intracellular balance of A and G nucleotides. This Streptococcus agalactiae serotype Ia (strain ATCC 27591 / A909 / CDC SS700) protein is GMP reductase.